The following is a 125-amino-acid chain: Small ribosomal subunit protein uS13 (125 aa).

This sequence belongs to the universal ribosomal protein uS13 family. In terms of assembly, part of the 30S ribosomal subunit. Forms a loose heterodimer with protein S19. Forms two bridges to the 50S subunit in the 70S ribosome.

In terms of biological role, located at the top of the head of the 30S subunit, it contacts several helices of the 16S rRNA. In the 70S ribosome it contacts the 23S rRNA (bridge B1a) and protein L5 of the 50S subunit (bridge B1b), connecting the 2 subunits; these bridges are implicated in subunit movement. Contacts the tRNAs in the A and P-sites. This Orientia tsutsugamushi (strain Ikeda) (Rickettsia tsutsugamushi) protein is Small ribosomal subunit protein uS13.